Here is a 387-residue protein sequence, read N- to C-terminus: Putative acid--amine ligase YjfC (387 aa).

Position 101-103 (101-103 (RMD)) interacts with ATP. Residues D103, E116, and N118 each contribute to the Mg(2+) site. Residues K265, K302, G309, Q337, and 372 to 374 (LIT) each bind ATP.

It belongs to the glutathionylspermidine synthase preATP-grasp family.

May be a ligase forming an amide bond. Shows ATPase activity. Despite its similarity to the C-terminal synthetase domain of Gss, is not a glutathionylspermidine (Gsp) synthetase. Cannot synthesize Gsp, glutathione (GSH), or GSH intermediates, from GSH and spermidine, cysteine and glutamate, gamma-glutamylcysteine and spermidine, and gamma-glutamylcysteine and glycine. Does not bind to Gsp. This chain is Putative acid--amine ligase YjfC (yjfC), found in Escherichia coli (strain K12).